Consider the following 327-residue polypeptide: Expansin-B7 (327 aa).

A signal peptide spans 1–30 (MAGRSRRRSFWSVGVAAALLCLLAAHGCSA). The tract at residues 30-88 (AKHHKPKPTPGGISGNASSSSSNSSTPSIPPPVAPTPTAPTPPIPSPGTGSSNGSSGGG) is disordered. The segment covering 44–56 (GNASSSSSNSSTP) has biased composition (low complexity). 2 N-linked (GlcNAc...) asparagine glycosylation sites follow: Asn-45 and Asn-52. The span at 57–75 (SIPPPVAPTPTAPTPPIPS) shows a compositional bias: pro residues. Asn-82 carries N-linked (GlcNAc...) asparagine glycosylation. One can recognise an Expansin-like EG45 domain in the interval 112–218 (GGACGFKNVN…RRVPCQYPGL (107 aa)). 3 disulfides stabilise this stretch: Cys-115-Cys-143, Cys-146-Cys-213, and Cys-151-Cys-157. An Expansin-like CBD domain is found at 231–322 (VYMAILVEYE…DWQPNTVYSS (92 aa)). N-linked (GlcNAc...) asparagine glycosylation occurs at Asn-298.

It belongs to the expansin family. Expansin B subfamily.

It localises to the secreted. It is found in the cell wall. The protein resides in the membrane. May cause loosening and extension of plant cell walls by disrupting non-covalent bonding between cellulose microfibrils and matrix glucans. No enzymatic activity has been found. May be required for rapid internodal elongation in deepwater rice during submergence. The sequence is that of Expansin-B7 (EXPB7) from Oryza sativa subsp. japonica (Rice).